A 154-amino-acid polypeptide reads, in one-letter code: Cyanate hydratase (154 aa).

Catalysis depends on residues arginine 100, glutamate 103, and serine 126.

Belongs to the cyanase family.

It carries out the reaction cyanate + hydrogencarbonate + 3 H(+) = NH4(+) + 2 CO2. Functionally, catalyzes the reaction of cyanate with bicarbonate to produce ammonia and carbon dioxide. In Aspergillus fumigatus (strain ATCC MYA-4609 / CBS 101355 / FGSC A1100 / Af293) (Neosartorya fumigata), this protein is Cyanate hydratase.